The sequence spans 90 residues: uncharacterized protein (90 aa).

The helical transmembrane segment at 12–32 threads the bilayer; the sequence is VVGGLSFWSFSAGVIMIVNAF.

Its subcellular location is the membrane. This is an uncharacterized protein from Mycoplasma pneumoniae (strain ATCC 29342 / M129 / Subtype 1) (Mycoplasmoides pneumoniae).